Reading from the N-terminus, the 101-residue chain is Small ribosomal subunit protein uS14 (101 aa).

Belongs to the universal ribosomal protein uS14 family. Part of the 30S ribosomal subunit. Contacts proteins S3 and S10.

In terms of biological role, binds 16S rRNA, required for the assembly of 30S particles and may also be responsible for determining the conformation of the 16S rRNA at the A site. The polypeptide is Small ribosomal subunit protein uS14 (Paraburkholderia phymatum (strain DSM 17167 / CIP 108236 / LMG 21445 / STM815) (Burkholderia phymatum)).